The sequence spans 258 residues: Ribosomal RNA small subunit methyltransferase J (258 aa).

S-adenosyl-L-methionine is bound by residues arginine 111–aspartate 112, glutamate 127–arginine 128, and aspartate 179.

The protein belongs to the methyltransferase superfamily. RsmJ family.

The protein resides in the cytoplasm. It carries out the reaction guanosine(1516) in 16S rRNA + S-adenosyl-L-methionine = N(2)-methylguanosine(1516) in 16S rRNA + S-adenosyl-L-homocysteine + H(+). Its function is as follows. Specifically methylates the guanosine in position 1516 of 16S rRNA. The chain is Ribosomal RNA small subunit methyltransferase J from Alteromonas mediterranea (strain DSM 17117 / CIP 110805 / LMG 28347 / Deep ecotype).